The following is a 484-amino-acid chain: Cysteine desulfurase, mitochondrial (484 aa).

A compositionally biased stretch (low complexity) spans 29–42 (LATSASTSSSTTTS). A disordered region spans residues 29–69 (LATSASTSSSTTTSNAETGELHVSTPLDSPSVHPPDGSSIS). Pyridoxal 5'-phosphate-binding positions include 153–154 (AT), Asn-233, Gln-261, and 281–283 (SSH). Lys-284 is modified (N6-(pyridoxal phosphate)lysine). Thr-321 provides a ligand contact to pyridoxal 5'-phosphate. Residue Cys-408 is the Cysteine persulfide intermediate of the active site. Cys-408 lines the [2Fe-2S] cluster pocket.

The protein belongs to the class-V pyridoxal-phosphate-dependent aminotransferase family. NifS/IscS subfamily. Requires pyridoxal 5'-phosphate as cofactor.

Its subcellular location is the mitochondrion. It carries out the reaction (sulfur carrier)-H + L-cysteine = (sulfur carrier)-SH + L-alanine. Functionally, catalyzes the removal of elemental sulfur from cysteine to produce alanine. It supplies the inorganic sulfur for iron-sulfur (Fe-S) clusters. Plays a role in both tRNA-processing and mitochondrial metabolism. Involved in the 2-thio-modification of both 5-carboxymethylaminomethyl-2-thiouridine in mitochondrial tRNAs and 5-methoxycarbonylmethyl-2-thiouridine (mcm5s2U) in cytoplasmic tRNAs. The sequence is that of Cysteine desulfurase, mitochondrial from Candida maltosa (Yeast).